The following is a 590-amino-acid chain: Beta-glucosidase 29 (590 aa).

A signal peptide spans 1–21 (MNVQIFILLLIISWLTPKITS). A beta-D-glucoside contacts are provided by residues Q48, H151, and 196–197 (NE). The active-site Proton donor is E197. A disulfide bond links C216 and C224. N255 and N331 each carry an N-linked (GlcNAc...) asparagine glycan. Y341 contacts a beta-D-glucoside. N371 carries N-linked (GlcNAc...) asparagine glycosylation. Residues E413, W463, 470–471 (EW), and F479 each bind a beta-D-glucoside. Catalysis depends on E413, which acts as the Nucleophile. N-linked (GlcNAc...) asparagine glycans are attached at residues N522 and N553.

The protein belongs to the glycosyl hydrolase 1 family.

It catalyses the reaction Hydrolysis of terminal, non-reducing beta-D-glucosyl residues with release of beta-D-glucose.. This chain is Beta-glucosidase 29, found in Arabidopsis thaliana (Mouse-ear cress).